A 490-amino-acid polypeptide reads, in one-letter code: Chromosomal replication initiator protein DnaA (490 aa).

The tract at residues 1–91 is domain I, interacts with DnaA modulators; that stretch reads MTMKGGVASQ…GELWAAHDAT (91 aa). The interval 91-147 is domain II; the sequence is TGRRIDLKSRLEFEAAAGAYVEATPKAVAAEPIEIVLPVSTDAPTVVAPSAKSPRTQ. The interval 148-370 is domain III, AAA+ region; sequence GLQERFTFET…GALNTLSARA (223 aa). ATP contacts are provided by Gly192, Gly194, Lys195, and Thr196. The tract at residues 371–490 is domain IV, binds dsDNA; it reads GEGLSRMTLD…LETLTRKLRG (120 aa).

This sequence belongs to the DnaA family. Oligomerizes as a right-handed, spiral filament on DNA at oriC.

Its subcellular location is the cytoplasm. In terms of biological role, plays an essential role in the initiation and regulation of chromosomal replication. ATP-DnaA binds to the origin of replication (oriC) to initiate formation of the DNA replication initiation complex once per cell cycle. Binds the DnaA box (a 9 base pair repeat at the origin) and separates the double-stranded (ds)DNA. Forms a right-handed helical filament on oriC DNA; dsDNA binds to the exterior of the filament while single-stranded (ss)DNA is stabiized in the filament's interior. The ATP-DnaA-oriC complex binds and stabilizes one strand of the AT-rich DNA unwinding element (DUE), permitting loading of DNA polymerase. After initiation quickly degrades to an ADP-DnaA complex that is not apt for DNA replication. Binds acidic phospholipids. The protein is Chromosomal replication initiator protein DnaA of Caulobacter vibrioides (strain ATCC 19089 / CIP 103742 / CB 15) (Caulobacter crescentus).